The primary structure comprises 669 residues: Diacylglycerol lipase-beta (669 aa).

Over 1–17 (MPGMVLFGRRWSLASDD) the chain is Cytoplasmic. Residues 18 to 38 (LVFPGSFELFLRVLWWIVSLT) traverse the membrane as a helical segment. Residues 39–58 (LYLTHRRRLDCPGGVLLSTY) are Extracellular-facing. The helical transmembrane segment at 59 to 79 (LIVLLVLLAVIICTVLAIVCV) threads the bilayer. Topologically, residues 80 to 102 (SMRGTICNPGPRKSMSKLLYIRL) are cytoplasmic. The chain crosses the membrane as a helical span at residues 103–123 (ALFLPEMVWASLGAAWVAKGI). The Extracellular portion of the chain corresponds to 124–128 (QCDRT). A helical membrane pass occupies residues 129–149 (VVIGIIATVIVSWIVIAATMV). Over 150-669 (TIIFVFDPLG…CPGQGGSSVP (520 aa)) the chain is Cytoplasmic. Residues S443 and D495 each act as charge relay system in the active site. 3 positions are modified to phosphoserine: S570, S578, and S582.

This sequence belongs to the AB hydrolase superfamily. Lipase family. The cofactor is Ca(2+). In terms of tissue distribution, expressed in liver and immune cells such as macrophages and microglias. In embryonic brains present in axonal tracts, while in adults localizes to dendritic fields, correlating with the developmental change in requirement for 2-AG synthesis from the pre- to the postsynaptic compartment (at protein level).

The protein localises to the cell membrane. The catalysed reaction is a 1,2-diacyl-sn-glycerol + H2O = a 2-acylglycerol + a fatty acid + H(+). It carries out the reaction 1-octadecanoyl-2-(5Z,8Z,11Z,14Z-eicosatetraenoyl)-sn-glycerol + H2O = 2-(5Z,8Z,11Z,14Z-eicosatetraenoyl)-glycerol + octadecanoate + H(+). The enzyme catalyses 1,2-di-(9Z-octadecenoyl)-sn-glycerol + H2O = 2-(9Z-octadecenoyl)-glycerol + (9Z)-octadecenoate + H(+). It catalyses the reaction 1-(9Z-octadecenoyl)-2-(5Z,8Z,11Z,14Z-eicosatetraenoyl)-sn-glycerol + H2O = 2-(5Z,8Z,11Z,14Z-eicosatetraenoyl)-glycerol + (9Z)-octadecenoate + H(+). The catalysed reaction is 1-(9Z-octadecenoyl)-2-octadecanoyl-sn-glycerol + H2O = 2-octadecanoylglycerol + (9Z)-octadecenoate + H(+). It carries out the reaction 1-(9Z-octadecenoyl)-2-(9Z,12Z-octadecadienoyl)-sn-glycerol + H2O = 2-(9Z,12Z-octadecadienoyl)-glycerol + (9Z)-octadecenoate + H(+). The enzyme catalyses 1-(9Z-octadecenoyl)-2-O-(5Z,8Z,11Z,14Z-eicosatetraenyl)-sn-glycerol + H2O = 2-O-(5Z,8Z,11Z,14Z)-eicosatetraenylglycerol + (9Z)-octadecenoate + H(+). It catalyses the reaction a triacylglycerol + H2O = a diacylglycerol + a fatty acid + H(+). The catalysed reaction is 1,2,3-tri-(5Z,8Z,11Z,14Z-eicosatetraenoyl)-glycerol + H2O = 1,2-di-(5Z,8Z,11Z,14Z-eicosatetraenoyl)-glycerol + (5Z,8Z,11Z,14Z)-eicosatetraenoate + H(+). It carries out the reaction 1,2,3-(4Z,7Z,10Z,13Z,16Z,19Z-docosahexaenoyl)-glycerol + H2O = 1,2-di-(4Z,7Z,10Z,13Z,16Z,19Z-docosahexaenoyl)-glycerol + (4Z,7Z,10Z,13Z,16Z,19Z)-docosahexaenoate + H(+). With respect to regulation, inhibited by the 1,2,3-triazole urea covalent inhibitors KT109 and KT172. Inhibited by p-hydroxy-mercuri-benzoate and HgCl(2), but not by PMSF. Also inhibited by RHC80267, a drug that blocks 2-AG formation. Its function is as follows. Lipase that catalyzes the hydrolysis of arachidonic acid (AA)-esterified diacylglycerols (DAGs) to produce the principal endocannabinoid, 2-arachidonoylglycerol (2-AG) which can be further cleaved by downstream enzymes to release arachidonic acid (AA) for cyclooxygenase (COX)-mediated eicosanoid production. Preferentially hydrolyzes DAGs at the sn-1 position in a calcium-dependent manner and has negligible activity against other lipids including monoacylglycerols and phospholipids. Plays a key role in the regulation of 2-AG and AA pools utilized by COX1/2 to generate lipid mediators of macrophage and microglia inflammatory responses. Also functions as a polyunsaturated fatty acids-specific triacylglycerol lipase in macrophages. Plays an important role to support the metabolic and signaling demands of macrophages. The polypeptide is Diacylglycerol lipase-beta (Daglb) (Mus musculus (Mouse)).